The following is a 468-amino-acid chain: MKTFMDKDFLLYNETAKTLFYNYACKCPIFDYHCHLNPKEIAENKKFKNITEIWLYGDHYKWRMMRANGIDEKFITGDASDYDKFIAWVKTVPNLIGNPLYHWSHLELQRYFDIHEVINEDNADTIWEKANQKLQNMTVKDILKKFKVHTIGTTDDPTDNLEYHKLINEGKAQIGKIYTKVVPSFRPDKAINIEMPDFSDYIKKLENASKINIKDINSLTEALYNRIDYFKSLGCVSSDCSLSIVPFNLDDEKNIDAIFKKAMNKESLNFEDIEKYKTYILIKLIKKYKESNLVMQIHISAMRNNNEVMFKKLGADTGYDSVGDSNIIEKLSFLLKTANNDGGLPKIIFYSLNHKDYYPLSTLMGCFQEGSIKGKMQLGSAWWFCDNRDGMEEQIKILANTGSLALFVGMLTDSRSFLSYSRHEYFRRILCNIIGEWADKGEVPNDIKYLGSIIENICFNNSNIYFNN.

Belongs to the metallo-dependent hydrolases superfamily. Uronate isomerase family.

The enzyme catalyses D-glucuronate = D-fructuronate. It catalyses the reaction aldehydo-D-galacturonate = keto-D-tagaturonate. It participates in carbohydrate metabolism; pentose and glucuronate interconversion. This Brachyspira hyodysenteriae (strain ATCC 49526 / WA1) protein is Uronate isomerase.